Consider the following 151-residue polypeptide: Large ribosomal subunit protein uL15 (151 aa).

The tract at residues 1–60 (MAENNPLKIHNLRPAPGAKTAKTRVGRGEASKGKTAGRGTKGTKARYQVPERFEGGQMPL) is disordered.

The protein belongs to the universal ribosomal protein uL15 family. In terms of assembly, part of the 50S ribosomal subunit.

Functionally, binds to the 23S rRNA. This is Large ribosomal subunit protein uL15 from Streptomyces avermitilis (strain ATCC 31267 / DSM 46492 / JCM 5070 / NBRC 14893 / NCIMB 12804 / NRRL 8165 / MA-4680).